Consider the following 454-residue polypeptide: MKKLFGTDGVRGVANVYPMTAEMAMQIGRAAAYIFKNGKKRHRIVIGKDTRLSGYMLESALMAGICSMGVDVLLVGPLPTPGIANITSSMRADAGVVISASHNPFEDNGIKFFSRDGFKLPDETELLMEELIFSKRIDSLRPTAKEVGKAYRIDDAQGRFVVFLKSTFPKDLDLSGLKIVLDCANGAAYKVAPAVFEELGAEVISIGVKPNGTNINADCGSLHPEVMSRAVKENGADLGIALDGDADRVIFVDEYGNVVDGDRIMAICATEMLRQGTLKQNTLVATVMSNMGLDIAMKRAGGQVVKTAVGDRYVVEEMLKGGYNLGGEQSGHMIFLDHNTTGDGVLSALQVLAIMQRHQKRLSELALVMDPLPQVLVNVRLAEKSDIMQVPEIAKMINDVEERLKGEGRVLIRYSGTEPLLRIMLEGSDEGDIRCWANDIASIVEQKLGGEARG.

The active-site Phosphoserine intermediate is S101. 4 residues coordinate Mg(2+): S101, D243, D245, and D247. Phosphoserine is present on S101.

The protein belongs to the phosphohexose mutase family. Requires Mg(2+) as cofactor. Activated by phosphorylation.

It catalyses the reaction alpha-D-glucosamine 1-phosphate = D-glucosamine 6-phosphate. In terms of biological role, catalyzes the conversion of glucosamine-6-phosphate to glucosamine-1-phosphate. In Geobacter sp. (strain M21), this protein is Phosphoglucosamine mutase.